The chain runs to 148 residues: Male-specific protein scotti (148 aa).

Residues 56–78 (PQEPPLGVFPAQGGPNGPPRLRK) are disordered. N-linked (GlcNAc...) asparagine glycosylation is present at Asn129.

Belongs to the male-specific scotti family.

In terms of biological role, post-meiotically transcribed gene that has a role in late spermiogenesis; required for actin cone progression during spermatid individualization. The polypeptide is Male-specific protein scotti (Drosophila sechellia (Fruit fly)).